The sequence spans 255 residues: Phosphate import ATP-binding protein PstB (255 aa).

Residues 10-250 (INIKDLNLWY…PQMKSTEDYI (241 aa)) enclose the ABC transporter domain. 42–49 (GPSGCGKS) is a binding site for ATP.

The protein belongs to the ABC transporter superfamily. Phosphate importer (TC 3.A.1.7) family. In terms of assembly, the complex is composed of two ATP-binding proteins (PstB), two transmembrane proteins (PstC and PstA) and a solute-binding protein (PstS).

It localises to the cell membrane. The catalysed reaction is phosphate(out) + ATP + H2O = ADP + 2 phosphate(in) + H(+). In terms of biological role, part of the ABC transporter complex PstSACB involved in phosphate import. Responsible for energy coupling to the transport system. The sequence is that of Phosphate import ATP-binding protein PstB from Methanococcoides burtonii (strain DSM 6242 / NBRC 107633 / OCM 468 / ACE-M).